The following is an 85-amino-acid chain: Putative membrane protein insertion efficiency factor (85 aa).

The protein belongs to the UPF0161 family.

Its subcellular location is the cell membrane. In terms of biological role, could be involved in insertion of integral membrane proteins into the membrane. The chain is Putative membrane protein insertion efficiency factor from Leifsonia xyli subsp. xyli (strain CTCB07).